We begin with the raw amino-acid sequence, 126 residues long: Fatty acid-binding protein, liver (126 aa).

Cholate is bound by residues 54 to 56, 99 to 101, and Arg121; these read TPN and HEQ.

The protein belongs to the calycin superfamily. Fatty-acid binding protein (FABP) family.

The protein resides in the cytoplasm. Functionally, FABPs are thought to play a role in the intracellular transport of long-chain fatty acids and their acyl-CoA esters. This is Fatty acid-binding protein, liver from Anolis pulchellus (Common grass anole).